The primary structure comprises 941 residues: Peroxisomal ATPase PEX6 (941 aa).

ATP is bound by residues 384–391 (GIPGCGKR) and 698–705 (GPPGTGKT).

The protein belongs to the AAA ATPase family. In terms of assembly, interacts with PEX1; forming the PEX1-PEX6 AAA ATPase complex, which is composed of a heterohexamer formed by a trimer of PEX1-PEX6 dimers. Interacts with APME9.

It localises to the cytoplasm. It is found in the cytosol. The protein localises to the peroxisome membrane. It carries out the reaction ATP + H2O = ADP + phosphate + H(+). In terms of biological role, component of the PEX1-PEX6 AAA ATPase complex, a protein dislocase complex that mediates the ATP-dependent extraction of the PEX5 receptor from peroxisomal membranes, an essential step for PEX5 recycling. Specifically recognizes PEX5 monoubiquitinated at 'Cys-11', and pulls it out of the peroxisome lumen through the PEX2-PEX10-PEX12 retrotranslocation channel. Extraction by the PEX1-PEX6 AAA ATPase complex is accompanied by unfolding of the TPR repeats and release of bound cargo from PEX5. Required for jasmonate biosynthesis. Necessary for the developmental elimination of obsolete peroxisome matix proteins. The polypeptide is Peroxisomal ATPase PEX6 (Arabidopsis thaliana (Mouse-ear cress)).